A 354-amino-acid chain; its full sequence is Nucleoporin seh1 (354 aa).

WD repeat units lie at residues 10–49, 55–96, 112–153, 161–209, 216–259, and 270–309; these read DHKDVIHDVVFDYYGRRMATCSSDQTVKIWDEDGQGKWNV, AHSG…KVSS, DSRT…NLSQ, SNKL…RKCV, DITD…TDIS, and EHNCPVWRVCWNMLATMLISTGDDGCVRLWRMNYNRQWRC.

Belongs to the WD repeat SEC13 family. In terms of assembly, probable component of the nuclear pore complex (NPC). Component of the GATOR complex consisting of mio, Nup44A/Seh1, Im11, Nplr3, Nplr2, Wdr24, Wdr59 and Sec13. Within the GATOR complex, probable component of the GATOR2 subcomplex which is likely composed of mio, Nup44A/Seh1, Wdr24, Wdr59 and Sec13. Interacts with mio. Interacts with Wdr24. The GATOR2 complex associates with unmet in the absence of S-adenosyl-L-methionine; the mio-Wdr24-Nup44A subcomplex is essential and sufficient for this interaction while Wdr59 and Sec13 are dispensable. This association acts as a nutrient sensor to inhibit mTORC1 signaling in the absence of methionine. As to expression, expressed in ovarian cysts.

The protein localises to the nucleus envelope. It is found in the lysosome. In terms of biological role, probable component of the nuclear pore complex (NPC). Involved in maintaining the localization of another nucleoporin Mgtor to the nuclear envelope of early meiotic female germline cells. It is not involved in recruiting the nucleoporins Mgtor, Nup107, Nup153 and FG-containing nucleoporins to the NPC. Functionally, an essential component of the GATOR subcomplex GATOR2 which functions as an activator of the amino acid-sensing branch of the mTORC1 signaling pathway. The two GATOR subcomplexes, GATOR1 and GATOR2, regulate the mTORC1 pathway in order to mediate metabolic homeostasis, female gametogenesis and the response to amino acid limitation and complete starvation. GATOR2 activates the mTORC1 signaling pathway through the inhibition of the GATOR1 subcomplex, controlling the switch to cell proliferation growth under nutrient replete conditions and growth during female oocyte development. This component is required for activating mTORC1 specifically in germline cells to promote cell growth and maintain the oocyte fate, probably influences the organization and/or function of microtubules within ovarian cysts, and promotes accumulation of another GATOR2 complex member mio in germline and somatic tissues. GATOR1 and GATOR2 act at different stages of oogenesis to regulate mTORC1 in order to control meiotic entry and promote oocyte growth and development. After exactly four mitotic cyst divisions, the GATOR1 complex members (Iml1, Nprl2 and Nprl3) down-regulate mTORC1 to slow cellular metabolism and promote the mitotic/meiotic transition. At later stages of oogenesis, the mio and Nup44A components of the GATOR2 complex inhibit GATOR1 and thus activate mTORC1 to promote meiotic progression, and drive oocyte growth and development. In addition to its role in the regulation of the mTORC1 complex, functions independently of mTORC1 to prevent the inappropriate accumulation of autolysosomes in germline tissues. In Drosophila melanogaster (Fruit fly), this protein is Nucleoporin seh1.